A 430-amino-acid polypeptide reads, in one-letter code: Enolase (430 aa).

Q163 provides a ligand contact to (2R)-2-phosphoglycerate. The active-site Proton donor is E205. The Mg(2+) site is built by D242, E288, and D315. The (2R)-2-phosphoglycerate site is built by K340, R369, S370, and K391. Residue K340 is the Proton acceptor of the active site.

Belongs to the enolase family. Requires Mg(2+) as cofactor.

It is found in the cytoplasm. The protein resides in the secreted. It localises to the cell surface. The catalysed reaction is (2R)-2-phosphoglycerate = phosphoenolpyruvate + H2O. It participates in carbohydrate degradation; glycolysis; pyruvate from D-glyceraldehyde 3-phosphate: step 4/5. Functionally, catalyzes the reversible conversion of 2-phosphoglycerate (2-PG) into phosphoenolpyruvate (PEP). It is essential for the degradation of carbohydrates via glycolysis. This is Enolase from Aster yellows witches'-broom phytoplasma (strain AYWB).